A 258-amino-acid chain; its full sequence is C4b-binding protein beta chain (258 aa).

The first 15 residues, 1–15, serve as a signal peptide directing secretion; that stretch reads MLCLVVCCLIWLISA. The Sushi 1; atypical; lacks a Cys domain occupies 18–75; that stretch reads GSCSEPPPVNNSVFVGKETEEQILGIYLCIKGYHLVGKKSLVFDPSKEWNSTLPECLL. N-linked (GlcNAc...) asparagine glycans are attached at residues Asn27, Asn67, Asn89, Asn95, and Asn114. 5 cysteine pairs are disulfide-bonded: Cys46–Cys73, Cys78–Cys118, Cys104–Cys131, Cys136–Cys176, and Cys162–Cys188. Sushi domains lie at 76–133 and 134–190; these read GHCP…ICRS and RDCE…TCES. A glycan (N-linked (GlcNAc...) asparagine) is linked at Asn218.

As to quaternary structure, disulfide-linked complex of alpha and beta chains.

Its subcellular location is the secreted. Its function is as follows. Controls the classical pathway of complement activation. It binds as a cofactor to C3b/C4b inactivator (C3bINA), which then hydrolyzes the complement fragment C4b. It also accelerates the degradation of the C4bC2a complex (C3 convertase) by dissociating the complement fragment C2a. It also interacts with anticoagulant protein S and with serum amyloid P component. The sequence is that of C4b-binding protein beta chain (C4bpb) from Rattus norvegicus (Rat).